The chain runs to 134 residues: Cytochrome b5 (134 aa).

Positions 5–81 constitute a Cytochrome b5 heme-binding domain; that stretch reads KKVLGFEEVS…MEKYYIGEID (77 aa). Positions 40 and 64 each coordinate heme. Residues 107 to 127 form a helical membrane-spanning segment; the sequence is FMIKILQFLVPILILGLALVV.

It belongs to the cytochrome b5 family.

The protein localises to the endoplasmic reticulum membrane. It localises to the microsome membrane. Functionally, membrane bound hemoprotein which function as an electron carrier for several membrane bound oxygenases. The chain is Cytochrome b5 (CYB5) from Brassica oleracea var. botrytis (Cauliflower).